Here is a 723-residue protein sequence, read N- to C-terminus: Heme/hemopexin utilization protein C (723 aa).

A signal peptide spans 1–21; the sequence is MRFSKLSLAITTTLVTANALA. A TBDR plug domain is found at 36–147; that stretch reads DPSRFAYTPE…LGGVVAMRTP (112 aa). The TBDR beta-barrel domain maps to 158–723; sequence KFGVKIRQGY…NAKISAVYSF (566 aa). Positions 706–723 match the TonB C-terminal box motif; it reads SLMEGTGRNAKISAVYSF.

The protein belongs to the TonB-dependent receptor family.

The protein resides in the cell outer membrane. Functionally, required for utilization of free heme at low concentrations. This is Heme/hemopexin utilization protein C (hxuC) from Haemophilus influenzae (strain ATCC 51907 / DSM 11121 / KW20 / Rd).